A 231-amino-acid chain; its full sequence is tRNA (guanine-N(1)-)-methyltransferase (231 aa).

Residues Gly111 and 131 to 136 contribute to the S-adenosyl-L-methionine site; that span reads LGNYVL.

This sequence belongs to the RNA methyltransferase TrmD family. Homodimer.

The protein resides in the cytoplasm. It carries out the reaction guanosine(37) in tRNA + S-adenosyl-L-methionine = N(1)-methylguanosine(37) in tRNA + S-adenosyl-L-homocysteine + H(+). Its function is as follows. Specifically methylates guanosine-37 in various tRNAs. This Leptospira interrogans serogroup Icterohaemorrhagiae serovar copenhageni (strain Fiocruz L1-130) protein is tRNA (guanine-N(1)-)-methyltransferase.